The following is a 454-amino-acid chain: tRNA-2-methylthio-N(6)-dimethylallyladenosine synthase (454 aa).

Residues 6-122 (RRYHITTFGC…LQDLLQEVLA (117 aa)) form the MTTase N-terminal domain. Residues Cys-15, Cys-51, Cys-85, Cys-157, Cys-161, and Cys-164 each contribute to the [4Fe-4S] cluster site. The Radical SAM core domain occupies 143-380 (RESTVTAWVN…NHLVAIKAAE (238 aa)). A TRAM domain is found at 383–447 (QRYLGRIEEV…AFSLTGEPVK (65 aa)).

The protein belongs to the methylthiotransferase family. MiaB subfamily. In terms of assembly, monomer. [4Fe-4S] cluster serves as cofactor.

Its subcellular location is the cytoplasm. It catalyses the reaction N(6)-dimethylallyladenosine(37) in tRNA + (sulfur carrier)-SH + AH2 + 2 S-adenosyl-L-methionine = 2-methylsulfanyl-N(6)-dimethylallyladenosine(37) in tRNA + (sulfur carrier)-H + 5'-deoxyadenosine + L-methionine + A + S-adenosyl-L-homocysteine + 2 H(+). In terms of biological role, catalyzes the methylthiolation of N6-(dimethylallyl)adenosine (i(6)A), leading to the formation of 2-methylthio-N6-(dimethylallyl)adenosine (ms(2)i(6)A) at position 37 in tRNAs that read codons beginning with uridine. This Gloeothece citriformis (strain PCC 7424) (Cyanothece sp. (strain PCC 7424)) protein is tRNA-2-methylthio-N(6)-dimethylallyladenosine synthase.